Reading from the N-terminus, the 391-residue chain is Transcription factor TCP3 (391 aa).

Residues Met1–Glu34 form a disordered region. Residues Arg49–Leu107 enclose the TCP domain. 3 disordered regions span residues His122 to Met168, His317 to His345, and Phe363 to His391. Positions Lys381 to His391 are enriched in polar residues.

In terms of assembly, interacts with SPL. Interacts with KIN10; KIN11 and FLZ3. As to expression, expressed in cotyledons, particularly in the vascular region, in leaves, roots, buds, flowers and immature siliques.

The protein localises to the nucleus. In terms of biological role, plays a pivotal role in the control of morphogenesis of shoot organs by negatively regulating the expression of boundary-specific genes such as CUC genes, probably through the induction of miRNA (e.g. miR164). Participates in ovule development. This is Transcription factor TCP3 (TCP3) from Arabidopsis thaliana (Mouse-ear cress).